Reading from the N-terminus, the 631-residue chain is Phosphomethylpyrimidine synthase (631 aa).

Substrate contacts are provided by residues Asn-239, Met-268, Tyr-297, His-333, 353 to 355 (SRG), 394 to 397 (DGLR), and Glu-433. A Zn(2+)-binding site is contributed by His-437. Residue Tyr-460 participates in substrate binding. His-501 lines the Zn(2+) pocket. The [4Fe-4S] cluster site is built by Cys-581, Cys-584, and Cys-589.

It belongs to the ThiC family. As to quaternary structure, homodimer. The cofactor is [4Fe-4S] cluster.

The catalysed reaction is 5-amino-1-(5-phospho-beta-D-ribosyl)imidazole + S-adenosyl-L-methionine = 4-amino-2-methyl-5-(phosphooxymethyl)pyrimidine + CO + 5'-deoxyadenosine + formate + L-methionine + 3 H(+). It participates in cofactor biosynthesis; thiamine diphosphate biosynthesis. In terms of biological role, catalyzes the synthesis of the hydroxymethylpyrimidine phosphate (HMP-P) moiety of thiamine from aminoimidazole ribotide (AIR) in a radical S-adenosyl-L-methionine (SAM)-dependent reaction. The protein is Phosphomethylpyrimidine synthase of Salmonella enteritidis PT4 (strain P125109).